Reading from the N-terminus, the 180-residue chain is ATP-dependent protease subunit HslV (180 aa).

T5 is an active-site residue. The Na(+) site is built by G165, C168, and T171.

Belongs to the peptidase T1B family. HslV subfamily. A double ring-shaped homohexamer of HslV is capped on each side by a ring-shaped HslU homohexamer. The assembly of the HslU/HslV complex is dependent on binding of ATP.

The protein localises to the cytoplasm. The catalysed reaction is ATP-dependent cleavage of peptide bonds with broad specificity.. Its activity is regulated as follows. Allosterically activated by HslU binding. Its function is as follows. Protease subunit of a proteasome-like degradation complex believed to be a general protein degrading machinery. This is ATP-dependent protease subunit HslV from Helicobacter pylori (strain ATCC 700392 / 26695) (Campylobacter pylori).